We begin with the raw amino-acid sequence, 215 residues long: Hibernation-associated plasma protein HP-25 (215 aa).

Positions 1–28 (MPAQRGGALSMGAAGFWILVLSITSALA) are cleaved as a signal peptide. A disordered region spans residues 29–96 (DSNNQGNSEP…RPKSAFAVKL (68 aa)). Composition is skewed to pro residues over residues 39 to 51 (CGPP…PGIP) and 60 to 77 (LGPP…PQGP). The Collagen-like domain occupies 40–81 (GPPGPPGPPGIPGFPGAPGALGPPGPPGVPGIPGPQGPPGDV). Residues 85 to 215 (SSRPKSAFAV…VFFGYLLYGK (131 aa)) enclose the C1q domain. Asn167 is a glycosylation site (N-linked (GlcNAc...) asparagine).

As to expression, plasma; synthesized in the liver.

It localises to the secreted. Its function is as follows. Plasma proteins HP-20, HP-25, HP-27 and HP-55 form a 140 kDa complex via disulfide bonds in the plasma and are hibernation specific. The polypeptide is Hibernation-associated plasma protein HP-25 (Tamias sibiricus (Siberian chipmunk)).